The chain runs to 187 residues: Cell division protein SepF (187 aa).

Positions Glu21–Ser97 are disordered. Composition is skewed to polar residues over residues Glu38–Thr63 and Arg70–Ser97.

Belongs to the SepF family. Homodimer. Interacts with FtsZ.

Its subcellular location is the cytoplasm. In terms of biological role, cell division protein that is part of the divisome complex and is recruited early to the Z-ring. Probably stimulates Z-ring formation, perhaps through the cross-linking of FtsZ protofilaments. Its function overlaps with FtsA. The polypeptide is Cell division protein SepF (Staphylococcus aureus (strain MRSA252)).